The sequence spans 61 residues: Large ribosomal subunit protein bL28 (61 aa).

It belongs to the bacterial ribosomal protein bL28 family.

This Nautilia profundicola (strain ATCC BAA-1463 / DSM 18972 / AmH) protein is Large ribosomal subunit protein bL28.